A 604-amino-acid chain; its full sequence is Polycomb group protein EMF2B (604 aa).

The C2H2-type zinc-finger motif lies at 310–331; it reads CPFCLVPCGSFKGLGCHLNASH. The disordered stretch occupies residues 396–440; sequence PHIVDSGSPEDAQAGSEDDYVQRENGSSVAHASVDPANSLHGSNL. The VEFS-box stretch occupies residues 454–589; sequence LSVERADPRN…DARAMNACNT (136 aa).

The protein belongs to the VEFS (VRN2-EMF2-FIS2-SU(Z)12) family. In terms of assembly, component of the polycomb repressive complex 2 (PRC2), composed of the core PRC2 components FIE2, EZ1 and CLF. PRC2 methylates 'Lys-27' residues of histone H3 (H3K27me3), leading to transcriptional repression of the affected target gene. In terms of tissue distribution, widely expressed.

Its function is as follows. Polycomb group (PcG) protein. PcG proteins act by forming multiprotein complexes, which are required to maintain the transcriptionally repressive state of homeotic genes throughout development. PcG proteins are not required to initiate repression, but to maintain it during later stages of development. They act via the methylation of histones, rendering chromatin heritably changed in its expressibility. Polycomb group (PcG) protein involved in the repression of flowering under long day (LD) conditions. Regulates floret development. This Oryza sativa subsp. japonica (Rice) protein is Polycomb group protein EMF2B.